A 129-amino-acid polypeptide reads, in one-letter code: Sulfurtransferase TusD (129 aa).

Residue Cys79 is the Cysteine persulfide intermediate of the active site.

This sequence belongs to the DsrE/TusD family. Heterohexamer, formed by a dimer of trimers. The hexameric TusBCD complex contains 2 copies each of TusB, TusC and TusD. The TusBCD complex interacts with TusE.

Its subcellular location is the cytoplasm. Functionally, part of a sulfur-relay system required for 2-thiolation of 5-methylaminomethyl-2-thiouridine (mnm(5)s(2)U) at tRNA wobble positions. Accepts sulfur from TusA and transfers it in turn to TusE. The polypeptide is Sulfurtransferase TusD (Pectobacterium carotovorum subsp. carotovorum (strain PC1)).